The following is a 936-amino-acid chain: MSSSSSPFFHPPPQQVMDDTTQQSPSYSQNSNSPSQHTFESMEPAAGGSTSMRYSPSGSSEADNPTLGLFSAQASYPYSLRKRRPCLTKDEDLCFPITAATADETPQPTMKKFKLECLSPGEARDFSIEDESGTNLEAKMETTECEPEEEEAVEEEDQQDHINRLPEELLLKVFSFLPDKSLLACSSVSYRFNQISNSHEVWKELYCNLYDYRIPLFHPSHAKFEFREQSRWRDGNPWKESHRQLHHGVHVMKEPRVNLRSVNYRCFDQIEKAQSFLEEDEYREKLIFLHTGVHEPIDTILINTDVQIIGASDSRDITSSVVLEGSKNTALTFTDGSANAYFGFITVRFRADPVCRQQPQIAQQAQQMNHFYSILVTDKDAMPYIERCDITSKVGNGAAVCVKKSAAPKFKYCTVLDCENVGIYITDNATGHYEHCEIARNTLAGVWVKNHANPYFRKCTIHSGKDVGVFTFEHGQGYFEKCNIHSNRISGIEVKNSANPVVIRCEVHHGYTGGIYVHERGRGQFMENRIYANAYAGIWITSHSDPTIRKNEIFTGQQGGVYIFGEGRGLIEQNNIYGNALAGIQIRSQSDPIVRLNKIHDGLHGGIYVHEKGRGLIEENEVYGNTLAGIWVTTGSSPILRKNRIHSGKQVGVYFYDQGHGLLEENDIFNHLYSGVQIRTGSNPKITRNKIWGGQNGGVLVYNGGKGCLEDNEIFDNAMAGVWIKTDSEPTLRRNKIYDGRDGGVCIFNRGKGLLEDNEIFRNAQAGVLISTESNPTLRRNRVFDGKSAGIEITNGATATLEENQLFRNKYGGLCVATGVTPVQRGNRIYDNHDTISRAIKTGLCLFKVSSNNSFPMHNFYRCTTCNTTERNAICTNCIRTCHRGHSVELVRFDRFFCDCGAGTLERHCHLQNVPRDNDTVYDSATPISTETGTEI.

The segment at 1-67 (MSSSSSPFFH…GSSEADNPTL (67 aa)) is disordered. Low complexity predominate over residues 22–36 (QQSPSYSQNSNSPSQ). Polar residues predominate over residues 48–63 (GSTSMRYSPSGSSEAD). An F-box domain is found at 159–205 (QDHINRLPEELLLKVFSFLPDKSLLACSSVSYRFNQISNSHEVWKEL). PbH1 repeat units lie at residues 405-427 (SAAP…YITD), 428-450 (NATG…WVKN), 451-473 (HANP…FTFE), 474-496 (HGQG…EVKN), 497-519 (SANP…YVHE), 520-542 (RGRG…WITS), 543-565 (HSDP…YIFG), 566-588 (EGRG…QIRS), 589-611 (QSDP…YVHE), 612-634 (KGRG…WVTT), 635-657 (GSSP…YFYD), 658-680 (QGHG…QIRT), 681-703 (GSNP…LVYN), 704-726 (GGKG…WIKT), 727-749 (DSEP…CIFN), 750-772 (RGKG…LIST), 773-795 (ESNP…EITN), and 796-818 (GATA…CVAT). The UBR-type zinc finger occupies 843–914 (GLCLFKVSSN…LERHCHLQNV (72 aa)).

As to quaternary structure, component of a SCF ubiquitin ligase complex. Interacts (via F-box) with skr-1. Interacts with blmp-1; the interaction targets blmp-1 for proteasomal degradation. Interacts with ced-9; the interaction inhibits ced-9 activity, either directly or indirectly. In mid-embryogenesis, expression is most prominent in epidermal and intestinal cells. By the 1.5-fold stage of embryogenesis, expression is additionally detected in neurons and other cells. During larval and adult stages, highest expression is seen in epidermal seam cells and hypodermis. In larvae, strongly expressed in the P epidermal blast cells and descendents that give rise to the vulva and weakly expressed in the somatic gonad, including the gonadoblasts, the anchor cell and the distal tip cells. Some weak expression also seen in adult spermatheca and uterus. In the musculature, expressed in the pharynx, anal depressor, sex muscles, and body wall muscles. Detected in neurons of the head, tail, ventral cord and periphery. Also expressed in the embryonic tail spike cell.

Its subcellular location is the nucleus. The protein localises to the cytoplasm. It participates in protein modification; protein ubiquitination. Functionally, substrate recognition component of a SCF (SKP1-CUL1-F-box protein) E3 ubiquitin-protein ligase complex which mediates the ubiquitination and subsequent proteasomal degradation of target proteins including blmp-1. Promotes ubiquitination of snail family proteins ces-1, scrt-1 and snai-1. Heterochronic protein which is required for the timing of gonad development and epidermal seam cell differentiation. Regulates tail-spike cell death through inhibition of the apoptosis regulator ced-9. This is F-box protein dre-1 from Caenorhabditis elegans.